The primary structure comprises 300 residues: Estradiol 17-beta-dehydrogenase 11 (300 aa).

The first 19 residues, 1-19, serve as a signal peptide directing secretion; sequence MKFLLDVLLLLPLLIVCSL. Residue 40-64 coordinates NADP(+); that stretch reads LITGAGHGIGRLTAYEFAKLKSKLV. Serine 172 is a binding site for substrate. Tyrosine 185 (proton acceptor) is an active-site residue.

Belongs to the short-chain dehydrogenases/reductases (SDR) family. 17-beta-HSD 3 subfamily.

Its subcellular location is the endoplasmic reticulum. It localises to the lipid droplet. The enzyme catalyses 17beta-estradiol + NAD(+) = estrone + NADH + H(+). The catalysed reaction is 17beta-estradiol + NADP(+) = estrone + NADPH + H(+). Can convert androstan-3-alpha,17-beta-diol (3-alpha-diol) to androsterone in vitro, suggesting that it may participate in androgen metabolism during steroidogenesis. May act by metabolizing compounds that stimulate steroid synthesis and/or by generating metabolites that inhibit it. Has no activity toward DHEA (dehydroepiandrosterone), or A-dione (4-androste-3,17-dione), and only a slight activity toward testosterone to A-dione. The protein is Estradiol 17-beta-dehydrogenase 11 (HSD17B11) of Pongo abelii (Sumatran orangutan).